A 420-amino-acid polypeptide reads, in one-letter code: Tyrosine--tRNA ligase (420 aa).

Tyr-36 lines the L-tyrosine pocket. Positions 41 to 50 (PTADSLHIGH) match the 'HIGH' region motif. Residues Tyr-170 and Gln-174 each contribute to the L-tyrosine site. The 'KMSKS' region motif lies at 231-235 (KFGKS). Lys-234 is an ATP binding site. In terms of domain architecture, S4 RNA-binding spans 353-420 (TNIVEVLIET…KKKYFMVNYQ (68 aa)).

The protein belongs to the class-I aminoacyl-tRNA synthetase family. TyrS type 1 subfamily. In terms of assembly, homodimer.

The protein localises to the cytoplasm. It carries out the reaction tRNA(Tyr) + L-tyrosine + ATP = L-tyrosyl-tRNA(Tyr) + AMP + diphosphate + H(+). Its function is as follows. Catalyzes the attachment of tyrosine to tRNA(Tyr) in a two-step reaction: tyrosine is first activated by ATP to form Tyr-AMP and then transferred to the acceptor end of tRNA(Tyr). The protein is Tyrosine--tRNA ligase of Staphylococcus aureus (strain bovine RF122 / ET3-1).